The following is a 286-amino-acid chain: Shikimate dehydrogenase (NADP(+)) (286 aa).

Shikimate contacts are provided by residues 19-21 (SLS) and threonine 66. Lysine 70 acts as the Proton acceptor in catalysis. Shikimate contacts are provided by asparagine 91 and aspartate 107. NADP(+) is bound by residues 129 to 133 (GSGGA) and leucine 229. Tyrosine 231 provides a ligand contact to shikimate. NADP(+) is bound at residue glycine 252.

The protein belongs to the shikimate dehydrogenase family. As to quaternary structure, homodimer.

The enzyme catalyses shikimate + NADP(+) = 3-dehydroshikimate + NADPH + H(+). It functions in the pathway metabolic intermediate biosynthesis; chorismate biosynthesis; chorismate from D-erythrose 4-phosphate and phosphoenolpyruvate: step 4/7. Involved in the biosynthesis of the chorismate, which leads to the biosynthesis of aromatic amino acids. Catalyzes the reversible NADPH linked reduction of 3-dehydroshikimate (DHSA) to yield shikimate (SA). The protein is Shikimate dehydrogenase (NADP(+)) of Prochlorococcus marinus (strain AS9601).